The following is a 189-amino-acid chain: dCTP deaminase (189 aa).

DCTP is bound by residues 112 to 117, 136 to 138, glutamine 157, tyrosine 171, and glutamine 181; these read KSTYAR and TLE. Residue glutamate 138 is the Proton donor/acceptor of the active site.

This sequence belongs to the dCTP deaminase family. In terms of assembly, homotrimer.

The enzyme catalyses dCTP + H2O + H(+) = dUTP + NH4(+). Its pathway is pyrimidine metabolism; dUMP biosynthesis; dUMP from dCTP (dUTP route): step 1/2. Catalyzes the deamination of dCTP to dUTP. This is dCTP deaminase from Methylacidiphilum infernorum (isolate V4) (Methylokorus infernorum (strain V4)).